The chain runs to 230 residues: RNA-binding protein 24 (230 aa).

Residues 11–88 (TKIFVGGLPY…RKANVNLAYL (78 aa)) enclose the RRM domain.

The protein resides in the nucleus. It localises to the cytoplasm. Functionally, multifunctional RNA-binding protein involved in the regulation of pre-mRNA splicing, mRNA stability and mRNA translation important for cell fate decision and differentiation. Plays a major role in pre-mRNA alternative splicing regulation. Mediates preferentially muscle-specific exon inclusion in numerous mRNAs important for striated cardiac and skeletal muscle cell differentiation. Binds to intronic splicing enhancer (ISE) composed of stretches of GU-rich motifs localized in flanking intron of exon that will be included by alternative splicing. Involved in embryonic stem cell (ESC) transition to cardiac cell differentiation by promoting pre-mRNA alternative splicing events of several pluripotency and/or differentiation genes. Plays a role in the regulation of mRNA stability and mRNA translation to which it is bound. Involved in myogenic differentiation by regulating myog levels. Binds to a huge amount of mRNAs. Required for embryonic heart development, sarcomer and M-band formation in striated muscles. The protein is RNA-binding protein 24 (rbm24) of Danio rerio (Zebrafish).